The sequence spans 219 residues: uncharacterized protein (219 aa).

A run of 5 helical transmembrane segments spans residues 14–34 (LVYSFPIVMAYIPVAFTFGVL), 37–57 (TLGFSEVEAMLASLLIFAGAS), 123–143 (FLLGLELGSYSAWVGGTALGV), 155–175 (VYSALVFSISALFLVLLLPNL), and 189–209 (VALAFHLLNLTSVGIIAAALA).

This sequence belongs to the AzlC family.

It is found in the cell membrane. This is an uncharacterized protein from Archaeoglobus fulgidus (strain ATCC 49558 / DSM 4304 / JCM 9628 / NBRC 100126 / VC-16).